We begin with the raw amino-acid sequence, 319 residues long: Acetyl-coenzyme A carboxylase carboxyl transferase subunit alpha (319 aa).

Residues 39–293 (KLEQKAAQLL…GDAIAEELKG (255 aa)) form the CoA carboxyltransferase C-terminal domain.

It belongs to the AccA family. Acetyl-CoA carboxylase is a heterohexamer composed of biotin carboxyl carrier protein (AccB), biotin carboxylase (AccC) and two subunits each of ACCase subunit alpha (AccA) and ACCase subunit beta (AccD).

It is found in the cytoplasm. It catalyses the reaction N(6)-carboxybiotinyl-L-lysyl-[protein] + acetyl-CoA = N(6)-biotinyl-L-lysyl-[protein] + malonyl-CoA. Its pathway is lipid metabolism; malonyl-CoA biosynthesis; malonyl-CoA from acetyl-CoA: step 1/1. Its function is as follows. Component of the acetyl coenzyme A carboxylase (ACC) complex. First, biotin carboxylase catalyzes the carboxylation of biotin on its carrier protein (BCCP) and then the CO(2) group is transferred by the carboxyltransferase to acetyl-CoA to form malonyl-CoA. The polypeptide is Acetyl-coenzyme A carboxylase carboxyl transferase subunit alpha (Parvibaculum lavamentivorans (strain DS-1 / DSM 13023 / NCIMB 13966)).